Consider the following 84-residue polypeptide: Putative defensin-like protein 139 (84 aa).

The N-terminal stretch at 1–28 (MEPSNQIFFYLRRSKLLSGLGEIRMAKG) is a signal peptide. Intrachain disulfides connect Cys-37–Cys-81, Cys-46–Cys-65, Cys-51–Cys-75, and Cys-55–Cys-77.

Belongs to the DEFL family.

The protein localises to the secreted. This is Putative defensin-like protein 139 (LCR7) from Arabidopsis thaliana (Mouse-ear cress).